Here is a 1138-residue protein sequence, read N- to C-terminus: Nuclear pore complex-interacting protein family member B13 (1138 aa).

The chain crosses the membrane as a helical span at residues 73–93; the sequence is VVITLWIVYLWVSLLKTIFWS. Disordered stretches follow at residues 242–578 and 747–1138; these read RMGH…NIKT and ERLR…RRLS. The span at 252 to 263 shows a compositional bias: polar residues; it reads QQHSITDNSLSL. The span at 349–359 shows a compositional bias: pro residues; that stretch reads PLPPSAPPSAP. 10 stretches are compositionally biased toward basic and acidic residues: residues 406-416, 448-458, 490-500, 532-542, 782-792, 824-834, 866-876, 908-918, 950-960, and 992-1002; these read DNIKTPAERLR.

This sequence belongs to the NPIP family.

The protein resides in the membrane. The sequence is that of Nuclear pore complex-interacting protein family member B13 from Homo sapiens (Human).